The primary structure comprises 276 residues: NH(3)-dependent NAD(+) synthetase (276 aa).

43-50 (GISGGVDS) contacts ATP. Aspartate 49 is a Mg(2+) binding site. Arginine 146 contributes to the deamido-NAD(+) binding site. Threonine 166 is an ATP binding site. Glutamate 171 is a Mg(2+) binding site. 2 residues coordinate deamido-NAD(+): lysine 179 and aspartate 186. Residues lysine 195 and threonine 217 each coordinate ATP. A deamido-NAD(+)-binding site is contributed by 266–267 (HK).

This sequence belongs to the NAD synthetase family. In terms of assembly, homodimer.

It carries out the reaction deamido-NAD(+) + NH4(+) + ATP = AMP + diphosphate + NAD(+) + H(+). The protein operates within cofactor biosynthesis; NAD(+) biosynthesis; NAD(+) from deamido-NAD(+) (ammonia route): step 1/1. Its function is as follows. Catalyzes the ATP-dependent amidation of deamido-NAD to form NAD. Uses ammonia as a nitrogen source. The polypeptide is NH(3)-dependent NAD(+) synthetase (Shewanella sediminis (strain HAW-EB3)).